The primary structure comprises 68 residues: Elastase inhibitor AFLEI (68 aa).

Cysteine 5 and cysteine 67 are joined by a disulfide.

It localises to the secreted. In terms of biological role, elastase inhibitor. Inhibitor of A.flavus elastase with a Ki of 40 nM. Inhibitor of A.fumigatus elastase and human leukocyte elastase. Inhibits the fibrinogenase and collagenase activities of A.flavus elastase. Does not inhibit porcine pancreatic elastase, trypsin, chymotrypsin, thrombin or A.acutus AC1-proteinase. The protein is Elastase inhibitor AFLEI of Aspergillus flavus.